The sequence spans 114 residues: Small ribosomal subunit protein uS14m (114 aa).

It belongs to the universal ribosomal protein uS14 family.

The protein resides in the mitochondrion. This chain is Small ribosomal subunit protein uS14m (MRP2), found in Eremothecium gossypii (strain ATCC 10895 / CBS 109.51 / FGSC 9923 / NRRL Y-1056) (Yeast).